The following is a 130-amino-acid chain: Large ribosomal subunit protein uL14 (130 aa).

The protein belongs to the universal ribosomal protein uL14 family. Part of the 50S ribosomal subunit. Forms a cluster with proteins L3 and L19. In the 70S ribosome, L14 and L19 interact and together make contacts with the 16S rRNA in bridges B5 and B8.

Its function is as follows. Binds to 23S rRNA. Forms part of two intersubunit bridges in the 70S ribosome. In Leptospira interrogans serogroup Icterohaemorrhagiae serovar copenhageni (strain Fiocruz L1-130), this protein is Large ribosomal subunit protein uL14.